The following is an 860-amino-acid chain: Leucine--tRNA ligase (860 aa).

The short motif at 42–52 (PYPSGRLHMGH) is the 'HIGH' region element. The 'KMSKS' region motif lies at 619-623 (KMSKS). Position 622 (Lys-622) interacts with ATP.

This sequence belongs to the class-I aminoacyl-tRNA synthetase family.

It localises to the cytoplasm. The enzyme catalyses tRNA(Leu) + L-leucine + ATP = L-leucyl-tRNA(Leu) + AMP + diphosphate. The chain is Leucine--tRNA ligase from Yersinia enterocolitica serotype O:8 / biotype 1B (strain NCTC 13174 / 8081).